The sequence spans 187 residues: Protein GrpE (187 aa).

The disordered stretch occupies residues Met1–Leu31.

It belongs to the GrpE family. Homodimer.

Its subcellular location is the cytoplasm. In terms of biological role, participates actively in the response to hyperosmotic and heat shock by preventing the aggregation of stress-denatured proteins, in association with DnaK and GrpE. It is the nucleotide exchange factor for DnaK and may function as a thermosensor. Unfolded proteins bind initially to DnaJ; upon interaction with the DnaJ-bound protein, DnaK hydrolyzes its bound ATP, resulting in the formation of a stable complex. GrpE releases ADP from DnaK; ATP binding to DnaK triggers the release of the substrate protein, thus completing the reaction cycle. Several rounds of ATP-dependent interactions between DnaJ, DnaK and GrpE are required for fully efficient folding. The polypeptide is Protein GrpE (Borrelia garinii subsp. bavariensis (strain ATCC BAA-2496 / DSM 23469 / PBi) (Borreliella bavariensis)).